The primary structure comprises 2381 residues: Myb-like protein U (2381 aa).

Disordered stretches follow at residues 1 to 85, 148 to 167, 178 to 492, and 641 to 696; these read MKTK…TSNN, SSSG…GGIS, PTIP…NNNN, and NINN…GDEM. 2 stretches are compositionally biased toward low complexity: residues 30–41 and 64–79; these read SKSSSKVSQSSS and TIPA…PTLT. Low complexity-rich tracts occupy residues 192 to 204, 225 to 261, and 291 to 315; these read NLSS…NILS, ENVN…SSSS, and SNKS…NNKK. The segment covering 331–343 has biased composition (acidic residues); the sequence is SEYDSSDSSDMDL. The span at 363–405 shows a compositional bias: low complexity; that stretch reads TTKPNNSNSNNNNNNNSINSTIPASNNINSANNSKTTNKNITS. A compositionally biased stretch (polar residues) spans 421–430; the sequence is SETPILTSVK. Composition is skewed to low complexity over residues 435–492 and 641–692; these read QQIP…NNNN and NINN…NNNN. The 44-residue stretch at 856-899 folds into the Myb-like domain; that stretch reads WHEEEKLLFRELFCAYGRDWQMVSTLMCGTKSPTQIKNFYYDVR. Disordered regions lie at residues 932 to 1024, 1068 to 1093, 1145 to 1207, 1295 to 1339, 1422 to 1474, 1597 to 1647, 1667 to 1849, 1961 to 1985, 2055 to 2106, and 2122 to 2280; these read KPEQ…ETPP, INQS…NINP, TSST…SNQE, STTT…PPID, PYYP…LSTP, PPAT…TTIV, PIVK…PPPV, TTVP…NGLA, TSTV…NGLT, and LSGI…NKND. A compositionally biased stretch (low complexity) spans 936 to 953; the sequence is NVNSNNNNNGGGNSLKDG. Over residues 982 to 995 the composition is skewed to basic residues; the sequence is VKKKSRTASKRSFR. Positions 1000–1013 are enriched in polar residues; the sequence is ANETNRTPKNQPKP. Low complexity-rich tracts occupy residues 1069–1092, 1145–1186, 1195–1205, and 1306–1325; these read NQSS…NNIN, TSST…TGSA, VNNNNNNNLSN, and TTTP…QLQQ. Residues 1326–1337 show a composition bias toward pro residues; that stretch reads LPPPPPPPPKPP. The span at 1427 to 1474 shows a compositional bias: low complexity; the sequence is PSSTTTNSATSTPTSTPTSTPSTSASTLTPTSTPTSTPVPAPTSLSTP. A compositionally biased stretch (pro residues) spans 1597-1606; the sequence is PPATITPILP. The segment covering 1618–1637 has biased composition (low complexity); sequence SSSSSSSSSSSSSSSSSSSS. 2 stretches are compositionally biased toward polar residues: residues 1638–1647 and 1671–1701; these read TTKNNSTTIV and QESN…KTLL. Low complexity-rich tracts occupy residues 1702–1735 and 1743–1809; these read PSNS…NPSS and TSNK…TLKP. Residues 1829-1844 show a composition bias toward polar residues; sequence APTNSTNQNTIPNATT. Low complexity-rich tracts occupy residues 1961-1970 and 2065-2097; these read TTVPGTTTTT and NNMT…QQST. Polar residues predominate over residues 2129-2138; that stretch reads NTLSGKSPTP. Residues 2154 to 2209 are compositionally biased toward low complexity; sequence PSLSSSSANPISITNNTTSLSQQSNTTNTMPSTVSLSSGSTSINSNSSNSKSLRSP. The segment covering 2210–2278 has biased composition (basic and acidic residues); that stretch reads KSSDNDGKES…NNNDKFDSNK (69 aa).

In Dictyostelium discoideum (Social amoeba), this protein is Myb-like protein U (mybU).